Consider the following 340-residue polypeptide: DNA-directed RNA polymerase subunit alpha (340 aa).

An alpha N-terminal domain (alpha-NTD) region spans residues 1 to 236 (MLSLSKNWNT…EQLQLFISFE (236 aa)). An alpha C-terminal domain (alpha-CTD) region spans residues 251–340 (FSPYLLKRVD…LSKRYEDSYN (90 aa)).

This sequence belongs to the RNA polymerase alpha chain family. As to quaternary structure, homodimer. The RNAP catalytic core consists of 2 alpha, 1 beta, 1 beta' and 1 omega subunit. When a sigma factor is associated with the core the holoenzyme is formed, which can initiate transcription.

The catalysed reaction is RNA(n) + a ribonucleoside 5'-triphosphate = RNA(n+1) + diphosphate. Functionally, DNA-dependent RNA polymerase catalyzes the transcription of DNA into RNA using the four ribonucleoside triphosphates as substrates. The protein is DNA-directed RNA polymerase subunit alpha of Rickettsia conorii (strain ATCC VR-613 / Malish 7).